Here is a 132-residue protein sequence, read N- to C-terminus: Small ribosomal subunit protein uS8 (132 aa).

Belongs to the universal ribosomal protein uS8 family. As to quaternary structure, part of the 30S ribosomal subunit. Contacts proteins S5 and S12.

Its function is as follows. One of the primary rRNA binding proteins, it binds directly to 16S rRNA central domain where it helps coordinate assembly of the platform of the 30S subunit. The sequence is that of Small ribosomal subunit protein uS8 from Xylella fastidiosa (strain M23).